A 729-amino-acid chain; its full sequence is Neurochondrin (729 aa).

The residue at position 2 (Ser-2) is an N-acetylserine. The residue at position 2 (Ser-2) is a Phosphoserine. 2 S-palmitoyl cysteine lipidation sites follow: Cys-3 and Cys-4. The residue at position 75 (Arg-75) is an Asymmetric dimethylarginine. At Ser-448 the chain carries Phosphoserine.

It belongs to the neurochondrin family. As to quaternary structure, interacts with MCHR1. Interacts with SEMA4C. Interacts with DIAPH1 (via FH3 domain). Interacts with GRM5. Post-translationally, palmitoylated. Palmitoylation by ZDHHC1, ZDHHC3 and ZDHHC11 regulates the association of NCDN with endosome membranes. May also be palmitoylated by ZDHHC7. As to expression, expressed in brain and in peripheral nervous system (at protein level). Weakly expressed in neurites.

The protein localises to the cytoplasm. Its subcellular location is the cytosol. The protein resides in the endosome membrane. It localises to the cell projection. It is found in the dendrite. The protein localises to the postsynapse. In terms of biological role, probably involved in signal transduction, in the nervous system, via increasing cell surface localization of GRM5 and positively regulating its signaling. Required for the spatial learning process. Acts as a negative regulator of Ca(2+)-calmodulin-dependent protein kinase 2 (CaMK2) phosphorylation. May play a role in modulating melanin-concentrating hormone-mediated functions via its interaction with MCHR1 that interferes with G protein-coupled signal transduction. May be involved in bone metabolism. May also be involved in neurite outgrowth. The sequence is that of Neurochondrin (Ncdn) from Rattus norvegicus (Rat).